The sequence spans 743 residues: Serine/threonine-protein kinase GD17699 (743 aa).

The interval 54–78 is disordered; that stretch reads NVQEDNSYNRDCDSPVSSSSEPEKE. Doublecortin domains follow at residues 154–240 and 309–392; these read LRIK…VEYN and RIVT…AEDF. Positions 473–731 constitute a Protein kinase domain; that stretch reads YTLGRIIGDG…SEDILDHPWT (259 aa). Residues 479–487 and K502 contribute to the ATP site; that span reads IGDGNFAIV. The active-site Proton acceptor is the D594.

It belongs to the protein kinase superfamily. CAMK Ser/Thr protein kinase family. CaMK subfamily.

The enzyme catalyses L-seryl-[protein] + ATP = O-phospho-L-seryl-[protein] + ADP + H(+). It catalyses the reaction L-threonyl-[protein] + ATP = O-phospho-L-threonyl-[protein] + ADP + H(+). This is Serine/threonine-protein kinase GD17699 from Drosophila simulans (Fruit fly).